The primary structure comprises 582 residues: TRAF-type zinc finger domain-containing protein 1 (582 aa).

An N-acetylalanine modification is found at Ala2. The TRAF-type zinc finger occupies 27 to 103 (IHEIHCQRNI…DLELSILKLK (77 aa)). The residue at position 191 (Ser191) is a Phosphoserine. Residues 216–238 (EEQERQERNRGQQPPKEGGEDGA) form a disordered region. Phosphoserine is present on residues Ser278, Ser320, Ser326, Ser327, Ser409, Ser415, Ser430, and Ser470. Disordered stretches follow at residues 402 to 509 (EGIP…IAPG) and 522 to 582 (PENI…EEEE). Composition is skewed to polar residues over residues 454 to 471 (PFNN…STSG) and 486 to 504 (LNNS…SQNG).

Interacts with MAVS, TICAM1, TRAF1, TRAF2, TRAF3 and TRAF6.

In terms of biological role, negative feedback regulator that controls excessive innate immune responses. Regulates both Toll-like receptor 4 (TLR4) and DDX58/RIG1-like helicases (RLH) pathways. May inhibit the LTR pathway by direct interaction with TRAF6 and attenuation of NF-kappa-B activation. May negatively regulate the RLH pathway downstream from MAVS and upstream of NF-kappa-B and IRF3. The protein is TRAF-type zinc finger domain-containing protein 1 (TRAFD1) of Macaca fascicularis (Crab-eating macaque).